Here is a 1729-residue protein sequence, read N- to C-terminus: Zinc finger CCCH domain-containing protein 13 (1729 aa).

Disordered regions lie at residues M1–T40 and C57–I156. The segment covering V10 to R23 has biased composition (polar residues). The C3H1-type zinc finger occupies S36 to S64. Phosphoserine is present on residues S64 and S77. Residues R76–E136 show a composition bias toward basic and acidic residues. A coiled-coil region spans residues H162–E196. A Glycyl lysine isopeptide (Lys-Gly) (interchain with G-Cter in SUMO2) cross-link involves residue K179. Positions Q182–I193 are enriched in basic and acidic residues. Disordered stretches follow at residues Q182–V528 and D581–D1527. A phosphoserine mark is found at S198, S207, S209, and S211. A compositionally biased stretch (low complexity) spans S204 to R213. The segment covering K214–S224 has biased composition (basic residues). At S242 the chain carries Phosphoserine. Over residues L245–N254 the composition is skewed to polar residues. T263 is modified (phosphothreonine). S265 carries the post-translational modification Phosphoserine. Residues K283–R315 show a composition bias toward basic and acidic residues. S316, S318, S324, and S327 each carry phosphoserine. The span at Q321–S345 shows a compositional bias: low complexity. Phosphothreonine is present on residues T353 and T363. The segment covering Y358–R368 has biased composition (polar residues). A phosphoserine mark is found at S369, S371, and S380. Composition is skewed to basic and acidic residues over residues P393–V528 and D581–S636. Polar residues predominate over residues T639–H654. A compositionally biased stretch (basic and acidic residues) spans D655–R701. The residue at position 704 (S704) is a Phosphoserine. The stretch at I706–E865 forms a coiled coil. The span at G710–K897 shows a compositional bias: basic and acidic residues. A phosphoserine mark is found at S907, S909, S913, S921, S924, S929, S949, S951, and S953. Positions H920 to R938 are enriched in basic and acidic residues. Residues L957–K1035 show a composition bias toward basic and acidic residues. Residue T958 is modified to Phosphothreonine. The segment covering K1036 to K1046 has biased composition (basic residues). Residues K1047 to S1065 are compositionally biased toward basic and acidic residues. 4 positions are modified to phosphoserine: S1069, S1086, S1090, and S1093. The segment covering K1072–S1086 has biased composition (basic residues). T1109 carries the post-translational modification Phosphothreonine. Composition is skewed to basic and acidic residues over residues I1114–N1137 and P1149–H1159. Composition is skewed to low complexity over residues T1160–L1176 and A1184–S1218. The segment covering A1228–R1253 has biased composition (basic and acidic residues). Residues S1256, S1259, S1273, and S1275 each carry the phosphoserine modification. Over residues S1278–S1288 the composition is skewed to basic and acidic residues. S1295 carries the phosphoserine modification. Basic and acidic residues-rich tracts occupy residues G1296–V1351 and D1359–F1440. Phosphoserine is present on residues S1427, S1443, S1447, S1467, S1470, S1499, and S1526. Basic and acidic residues-rich tracts occupy residues S1447–L1482 and D1490–S1499.

The protein belongs to the ZC3H13 family. As to quaternary structure, component of the WMM complex, a N6-methyltransferase complex composed of a catalytic subcomplex, named MAC, and of an associated subcomplex, named MACOM. The MAC subcomplex is composed of METTL3 and METTL14. The MACOM subcomplex is composed of WTAP, ZC3H13, CBLL1/HAKAI, VIRMA, and, in some cases of RBM15 (RBM15 or RBM15B). Also a component of a MACOM-like complex, named WTAP complex, composed of WTAP, ZC3H13, CBLL1/HAKAI, VIRMA, RBM15, BCLAF1 and THRAP3.

It is found in the nucleus speckle. The protein localises to the nucleus. The protein resides in the nucleoplasm. Functionally, associated component of the WMM complex, a complex that mediates N6-methyladenosine (m6A) methylation of RNAs, a modification that plays a role in the efficiency of mRNA splicing and RNA processing. Acts as a key regulator of m6A methylation by promoting m6A methylation of mRNAs at the 3'-UTR. Controls embryonic stem cells (ESCs) pluripotency via its role in m6A methylation. In the WMM complex, anchors component of the MACOM subcomplex in the nucleus. Also required for bridging WTAP to the RNA-binding component RBM15 (RBM15 or RBM15B). This Mus musculus (Mouse) protein is Zinc finger CCCH domain-containing protein 13.